The following is a 394-amino-acid chain: MARFIILFLLLAPVYSRLCLRNHPDTTWIGDSRSDQSRVNQQSLDLVTNFKGILQAKNGNGLMKQMSGRFPSDWYQPTTKYRILYIGTNDCTEGPNDVIIPTSMTLDNVARDLYLGACRGDVRVTPTFVGAAELGLIGRTDALTEFSVKVLTFNNPTIVVVGLNGMSGIYKVCIAASSGNVGGVNLVNGCGYFSAPLRFDNFKGQIYVSDTFEVRGTKNKCVILRSSSNAPLCTHIKRNIELDEYVDTPNTGGVYPSDGFDSLHGSASIRTFLTEALTCPGVDWDRIDAASCEYDSCPKLVKEFDQTGLGNTDTQIMRELEAQKEMIGKLGRNITDVNNRVDAIPPQLSNIFISMGVAGFGIALFLAGWKACVWIAAFMYKSRGRNPPANLSVA.

An N-terminal signal peptide occupies residues 1 to 16 (MARFIILFLLLAPVYS). Over 17-347 (RLCLRNHPDT…NNRVDAIPPQ (331 aa)) the chain is Extracellular. Residue S32 is part of the active site. Residues 119 to 121 (RGD) carry the Cell attachment site motif. Active-site residues include D261 and H264. An N-linked (GlcNAc...) asparagine; by host glycan is attached at N333. The segment at 335 to 358 (TDVNNRVDAIPPQLSNIFISMGVA) is highly polymorphic region. A helical transmembrane segment spans residues 348–368 (LSNIFISMGVAGFGIALFLAG). The Cytoplasmic segment spans residues 369–394 (WKACVWIAAFMYKSRGRNPPANLSVA).

The protein localises to the host membrane. It localises to the virion membrane. The catalysed reaction is N-acetyl-9-O-acetylneuraminate + H2O = N-acetylneuraminate + acetate + H(+). It catalyses the reaction N-acetyl-4-O-acetylneuraminate + H2O = N-acetylneuraminate + acetate + H(+). Its function is as follows. Performs attachment to host receptor thereby inducing virus particle entry into target cell. Binds specifically to 5-N-acetyl-4-O-acetyl neuraminic acid on host cells, which plays a major role in cell tropism of the virus. ALso mediates de-O-acetylation of N-acetyl-4-O-acetylneuraminic acid. This receptor-destroying activity is important for virus release as it probably helps preventing self-aggregation and ensures the efficient spread of the progeny virus from cell to cell. The highly polymorphic region (HPR) modulates the virulence in host. Catalyzes the removal of terminal sialic acid residues from viral and cellular glycoconjugates. This is Hemagglutinin-esterase from Gadus morhua (Atlantic cod).